A 513-amino-acid chain; its full sequence is Histidine ammonia-lyase (513 aa).

Positions 143-145 form a cross-link, 5-imidazolinone (Ala-Gly); the sequence is ASG. At S144 the chain carries 2,3-didehydroalanine (Ser).

This sequence belongs to the PAL/histidase family. Contains an active site 4-methylidene-imidazol-5-one (MIO), which is formed autocatalytically by cyclization and dehydration of residues Ala-Ser-Gly.

The protein localises to the cytoplasm. It carries out the reaction L-histidine = trans-urocanate + NH4(+). It participates in amino-acid degradation; L-histidine degradation into L-glutamate; N-formimidoyl-L-glutamate from L-histidine: step 1/3. The polypeptide is Histidine ammonia-lyase (Xanthomonas campestris pv. campestris (strain B100)).